Reading from the N-terminus, the 262-residue chain is Transcription factor Spi-B (262 aa).

The segment at 1–31 (MLALEAAQLDGPHFSCLYPDGVFYDLDSCKH) is TAD1 (Acidic). The interval 41–61 (PDSLWDWTVAPPVPATPYEAF) is TAD2. The interval 140 to 163 (ALEVSDSESDEALVAGPEGKGSEA) is disordered. Residues 169–252 (LRLYQFLLGL…VKRKLTYQFD (84 aa)) constitute a DNA-binding region (ETS).

This sequence belongs to the ETS family. As to quaternary structure, can form homotypic interactions. Interacts with IRF4/Pip. Interacts with JUN. Interacts with TBP. May also interact with CREBBP and EP300. Interacts with NONO/p54(nrb). Expressed in plasmacytoid dendritic cells (pDCs) and B-cells, not expressed in T-cells or granulocytes. May also be enriched in stem cell populations of the liver.

It is found in the nucleus. Its subcellular location is the cytoplasm. In terms of biological role, sequence specific transcriptional activator which binds to the PU-box, a purine-rich DNA sequence (5'-GAGGAA-3') that can act as a lymphoid-specific enhancer. Promotes development of plasmacytoid dendritic cells (pDCs), also known as type 2 DC precursors (pre-DC2) or natural interferon (IFN)-producing cells. These cells have the capacity to produce large amounts of interferon and block viral replication. May be required for B-cell receptor (BCR) signaling, which is necessary for normal B-cell development and antigenic stimulation. This is Transcription factor Spi-B (SPIB) from Homo sapiens (Human).